Reading from the N-terminus, the 89-residue chain is Small ribosomal subunit protein uS15 (89 aa).

It belongs to the universal ribosomal protein uS15 family. Part of the 30S ribosomal subunit. Forms a bridge to the 50S subunit in the 70S ribosome, contacting the 23S rRNA.

Functionally, one of the primary rRNA binding proteins, it binds directly to 16S rRNA where it helps nucleate assembly of the platform of the 30S subunit by binding and bridging several RNA helices of the 16S rRNA. Its function is as follows. Forms an intersubunit bridge (bridge B4) with the 23S rRNA of the 50S subunit in the ribosome. This chain is Small ribosomal subunit protein uS15, found in Dinoroseobacter shibae (strain DSM 16493 / NCIMB 14021 / DFL 12).